The chain runs to 216 residues: Orotate phosphoribosyltransferase (216 aa).

Residues Arg-101, Lys-105, His-107, and 127–135 (EDLISTGGS) each bind 5-phospho-alpha-D-ribose 1-diphosphate. Ser-131 contacts orotate.

It belongs to the purine/pyrimidine phosphoribosyltransferase family. PyrE subfamily. As to quaternary structure, homodimer. The cofactor is Mg(2+).

The enzyme catalyses orotidine 5'-phosphate + diphosphate = orotate + 5-phospho-alpha-D-ribose 1-diphosphate. The protein operates within pyrimidine metabolism; UMP biosynthesis via de novo pathway; UMP from orotate: step 1/2. In terms of biological role, catalyzes the transfer of a ribosyl phosphate group from 5-phosphoribose 1-diphosphate to orotate, leading to the formation of orotidine monophosphate (OMP). The chain is Orotate phosphoribosyltransferase from Cutibacterium acnes (strain DSM 16379 / KPA171202) (Propionibacterium acnes).